The chain runs to 58 residues: Preprotein translocase subunit SecG (58 aa).

Over 1-32 the chain is Cytoplasmic; it reads MAQKKKSSGSGLMSSAGLMTYYDADKKAIHVQ. Residues 33–54 form a helical membrane-spanning segment; it reads PKTVFIFGAICGIVILAFSAGF. The Extracellular segment spans residues 55-58; it reads GLWP.

It belongs to the SEC61-beta family. Component of the protein translocase complex. Heterotrimer consisting of alpha (SecY), beta (SecG) and gamma (SecE) subunits. Can form oligomers of the heterotrimer.

The protein localises to the cell membrane. In terms of biological role, involved in protein export. The function of the beta subunit is unknown, but it may be involved in stabilization of the trimeric complex. This is Preprotein translocase subunit SecG from Methanococcoides burtonii (strain DSM 6242 / NBRC 107633 / OCM 468 / ACE-M).